The chain runs to 78 residues: Defensin-like protein (78 aa).

Positions 1–31 (MGRSIRLFATFFLIAMLFLSTEMGPMTSAEA) are cleaved as a signal peptide. Intrachain disulfides connect C34–C78, C45–C65, C51–C72, and C55–C74.

The protein belongs to the DEFL family. Predominantly expressed in the pistil during all stages of flower development.

It is found in the secreted. May be involved in the defense of the pistil against pathogen infection. The sequence is that of Defensin-like protein from Petunia integrifolia (Violet-flowered petunia).